Consider the following 353-residue polypeptide: D-alanine--D-alanine ligase A (353 aa).

The region spanning 141 to 346 is the ATP-grasp domain; it reads KRLVNEAGLS…YPEIINRLVA (206 aa). 169–224 lines the ATP pocket; the sequence is EQALGLPIFIKPARQGSSVGVHKVVTEADYQAAMSDGFIYDDKLLAEEFIQAREVE. The Mg(2+) site is built by Asp-300, Glu-313, and Asn-315.

This sequence belongs to the D-alanine--D-alanine ligase family. Requires Mg(2+) as cofactor. The cofactor is Mn(2+).

It localises to the cytoplasm. It catalyses the reaction 2 D-alanine + ATP = D-alanyl-D-alanine + ADP + phosphate + H(+). It functions in the pathway cell wall biogenesis; peptidoglycan biosynthesis. Functionally, cell wall formation. The sequence is that of D-alanine--D-alanine ligase A from Brucella melitensis biotype 1 (strain ATCC 23456 / CCUG 17765 / NCTC 10094 / 16M).